Reading from the N-terminus, the 236-residue chain is Ribitol-5-phosphate cytidylyltransferase (236 aa).

Residues Leu7–Gly10 and Gly80–Thr86 each bind CTP.

It belongs to the IspD/TarI cytidylyltransferase family. TarI subfamily.

The enzyme catalyses D-ribitol 5-phosphate + CTP + H(+) = CDP-L-ribitol + diphosphate. It participates in cell wall biogenesis; poly(ribitol phosphate) teichoic acid biosynthesis. Catalyzes the transfer of the cytidylyl group of CTP to D-ribitol 5-phosphate. This is Ribitol-5-phosphate cytidylyltransferase from Listeria monocytogenes serovar 1/2a (strain ATCC BAA-679 / EGD-e).